The following is a 94-amino-acid chain: NADH-ubiquinone oxidoreductase 10.5 kDa subunit (94 aa).

Belongs to the complex I NDUFA2 subunit family. Complex I is composed of about 40 different subunits.

It localises to the mitochondrion inner membrane. In terms of biological role, accessory subunit of the mitochondrial membrane respiratory chain NADH dehydrogenase (Complex I), that is believed not to be involved in catalysis. Complex I functions in the transfer of electrons from NADH to the respiratory chain. The immediate electron acceptor for the enzyme is believed to be ubiquinone. The protein is NADH-ubiquinone oxidoreductase 10.5 kDa subunit (nuo-10.5) of Neurospora crassa (strain ATCC 24698 / 74-OR23-1A / CBS 708.71 / DSM 1257 / FGSC 987).